A 129-amino-acid chain; its full sequence is Capsid protein (129 aa).

The viral RNA-binding stretch occupies residues 31 to 104; it reads EWISSNSRSQ…FATNSDCELI (74 aa).

Belongs to the Leviviricetes capsid protein family. In terms of assembly, homodimer. The capsid proteins form dimers that assemble by group of 5. Twelve such pentamers are linked together with free dimers. The homodimers binds to the viral RNA via an operator hairpin, but also to many other RNA sequences in the viral genome; this interaction probably shifts the virus from the replicative to the assembly phase and ensures specific encapsidation of the viral genome.

The protein localises to the virion. Functionally, capsid protein self-assembles to form an icosahedral capsid with a T=3 symmetry, about 26 nm in diameter, and consisting of 89 capsid proteins dimers (178 capsid proteins). Involved in viral genome encapsidation through the interaction between a capsid protein dimer and the multiple packaging signals present in the RNA genome. The capsid also contains 1 copy of the A2 maturation protein. In terms of biological role, acts as a translational repressor of viral replicase synthesis late in infection. This latter function is the result of capsid protein interaction with an RNA hairpin which contains the replicase ribosome-binding site. This Enterobacteria phage f2 (Bacteriophage f2) protein is Capsid protein.